Here is a 151-residue protein sequence, read N- to C-terminus: Deoxyuridine 5'-triphosphate nucleotidohydrolase (151 aa).

Residues 70–72, asparagine 83, 87–89, and methionine 97 contribute to the substrate site; these read RSG and LID.

This sequence belongs to the dUTPase family. Mg(2+) is required as a cofactor.

It carries out the reaction dUTP + H2O = dUMP + diphosphate + H(+). Its pathway is pyrimidine metabolism; dUMP biosynthesis; dUMP from dCTP (dUTP route): step 2/2. In terms of biological role, this enzyme is involved in nucleotide metabolism: it produces dUMP, the immediate precursor of thymidine nucleotides and it decreases the intracellular concentration of dUTP so that uracil cannot be incorporated into DNA. This is Deoxyuridine 5'-triphosphate nucleotidohydrolase from Stutzerimonas stutzeri (strain A1501) (Pseudomonas stutzeri).